A 538-amino-acid polypeptide reads, in one-letter code: Phosphoenolpyruvate carboxykinase (ATP) (538 aa).

Substrate is bound by residues R61, Y195, and K201. ATP contacts are provided by residues K201, H220, and 236-244 (GLSGTGKTT). 2 residues coordinate Mn(2+): K201 and H220. D257 lines the Mn(2+) pocket. ATP-binding residues include E285, R323, and T449. R323 contributes to the substrate binding site.

The protein belongs to the phosphoenolpyruvate carboxykinase (ATP) family. The cofactor is Mn(2+).

The protein localises to the cytoplasm. The catalysed reaction is oxaloacetate + ATP = phosphoenolpyruvate + ADP + CO2. It functions in the pathway carbohydrate biosynthesis; gluconeogenesis. In terms of biological role, involved in the gluconeogenesis. Catalyzes the conversion of oxaloacetate (OAA) to phosphoenolpyruvate (PEP) through direct phosphoryl transfer between the nucleoside triphosphate and OAA. This Bradyrhizobium diazoefficiens (strain JCM 10833 / BCRC 13528 / IAM 13628 / NBRC 14792 / USDA 110) protein is Phosphoenolpyruvate carboxykinase (ATP).